The primary structure comprises 257 residues: Snake venom serine protease KN11 (257 aa).

The signal sequence occupies residues 1–18 (MVLIRVLANLLILQLSYA). Positions 19–24 (QKSSEL) are excised as a propeptide. Residues 25–248 (VTGGHPCNIN…HLDWIKSIIA (224 aa)) enclose the Peptidase S1 domain. 6 disulfides stabilise this stretch: Cys-31–Cys-162, Cys-49–Cys-65, Cys-97–Cys-255, Cys-141–Cys-209, Cys-173–Cys-188, and Cys-199–Cys-224. Active-site charge relay system residues include His-64 and Asp-109. Asn-120 and Asn-121 each carry an N-linked (GlcNAc...) asparagine glycan. Ser-203 serves as the catalytic Charge relay system.

It belongs to the peptidase S1 family. Snake venom subfamily. Monomer. In terms of tissue distribution, expressed by the venom gland.

It localises to the secreted. Functionally, snake venom serine protease that may act in the hemostasis system of the prey. The protein is Snake venom serine protease KN11 of Trimeresurus stejnegeri (Chinese green tree viper).